The chain runs to 378 residues: Ferredoxin--NADP reductase, root isozyme 1, chloroplastic (378 aa).

Residues 1 to 65 (MALSTTPSQM…KRSTICMSLQ (65 aa)) constitute a chloroplast transit peptide. Residues 93-221 (KEPYTATIVS…TGPSGKVMLL (129 aa)) enclose the FAD-binding FR-type domain. An intrachain disulfide couples Cys-196 to Cys-201. At Ser-197 the chain carries Phosphoserine. Thr-229 bears the Phosphothreonine mark. 231–249 (IMIATGTGVAPYRGYLRRM) serves as a coordination point for NADP(+). Residues 349-373 (LKRVAEERGESWEQKLTQLRKNKQW) adopt a coiled-coil conformation.

It belongs to the ferredoxin--NADP reductase type 1 family. The cofactor is FAD. Expressed in shoots and roots. Less abundant in roots than RFNR2.

It localises to the plastid. Its subcellular location is the chloroplast. The catalysed reaction is 2 reduced [2Fe-2S]-[ferredoxin] + NADP(+) + H(+) = 2 oxidized [2Fe-2S]-[ferredoxin] + NADPH. Maintains the supply of reduced ferredoxin under non-photosynthetic conditions. The protein is Ferredoxin--NADP reductase, root isozyme 1, chloroplastic (RFNR1) of Arabidopsis thaliana (Mouse-ear cress).